Here is a 477-residue protein sequence, read N- to C-terminus: (R)-2-hydroxyglutaryl-CoA dehydratase, subunit alpha (477 aa).

This sequence belongs to the FldB/FldC dehydratase alpha/beta subunit family. The (R)-2-hydroxyglutaryl-CoA dehydratase enzyme system is a heterodimer composed of an alpha subunit (HgdA) and a beta subunit (HgdB). It depends on [4Fe-4S] cluster as a cofactor. Requires FMN as cofactor. Mg(2+) is required as a cofactor.

It localises to the cytoplasm. It carries out the reaction (R)-2-hydroxyglutaryl-CoA = (2E)-glutaconyl-CoA + H2O. The protein operates within amino-acid degradation; L-glutamate degradation via hydroxyglutarate pathway; crotonoyl-CoA from L-glutamate: step 4/5. With respect to regulation, activated by the HgdC. Reversibly inactivated by oxidants such as 2-nitrophenol, 3-nitrophenol, 4-nitrophenol, 4-nitrobenzoate, carbonyl cyanide 4-(trifluoromethoxy)phenylhydrazone (FCCP) and chloramphenicol. Irreversibly inactivated by oxidants such as hydroxylamine and nitrite. In terms of biological role, involved in the fermentation of L-glutamate via the hydroxyglutarate pathway. Catalyzes the reversible syn-elimination of water from (R)-2-hydroxyglutaryl-CoA to yield (E)-glutaconyl-CoA. The dehydration mechanism involves a transient one electron reduction of the thioester from (R)-2-hydroxyglutaryl-CoA, generating a ketyl radical. Prior to (E)-glutaconyl-CoA formation, the ketyl radical is subsequently reoxidized by electron transfer back to the HgdA-HgdB complex (CompD) to avoid change in oxidation state of the substrate. The appropriate redox state of dehydratase HgdA-HgdB complex (CompD) is maintained by HgdC (CompA) via hydrolysis of ATP and ATP-dependent electron transfer. Since the electron is recycled, the dehydratase is able to perform several turnovers with only catalytic amounts of ATP and substoichiometric amounts of HgdC (CompA). The polypeptide is (R)-2-hydroxyglutaryl-CoA dehydratase, subunit alpha (Acidaminococcus fermentans (strain ATCC 25085 / DSM 20731 / CCUG 9996 / CIP 106432 / VR4)).